The sequence spans 391 residues: Cytochrome b (391 aa).

The next 4 membrane-spanning stretches (helical) occupy residues 33–53 (FGSLLSLCLALQILTGLFLAM), 77–98 (WLIRSIHANGASFFFICIYLHI), 113–133 (WSAGVILLLLVMMTAFVGYVL), and 178–198 (FFAFHFLFPFGIIAMTLVHLL). Heme b contacts are provided by His83 and His97. 2 residues coordinate heme b: His182 and His196. His201 is an a ubiquinone binding site. Helical transmembrane passes span 226-246 (YKDLIGFAWFALFLITLVLFI), 288-308 (LGGVFALLASILILLIVPILH), 320-340 (LAQIFMGLLVVDVAILTWIGG), and 347-367 (FIIIGQIASFLYFFLFLVFFP).

It belongs to the cytochrome b family. The cytochrome bc1 complex contains 3 respiratory subunits (MT-CYB, CYC1 and UQCRFS1), 2 core proteins (UQCRC1 and UQCRC2) and probably 6 low-molecular weight proteins. It depends on heme b as a cofactor.

It is found in the mitochondrion inner membrane. Functionally, component of the ubiquinol-cytochrome c reductase complex (complex III or cytochrome b-c1 complex) that is part of the mitochondrial respiratory chain. The b-c1 complex mediates electron transfer from ubiquinol to cytochrome c. Contributes to the generation of a proton gradient across the mitochondrial membrane that is then used for ATP synthesis. The polypeptide is Cytochrome b (mt-cyb) (Kryptolebias marmoratus (Mangrove killifish)).